Here is a 205-residue protein sequence, read N- to C-terminus: UPF0111 protein YkaA (205 aa).

Belongs to the UPF0111 family.

This chain is UPF0111 protein YkaA (ykaA), found in Bacillus subtilis (strain 168).